Here is a 503-residue protein sequence, read N- to C-terminus: MKLDTQQISHLLSRQMYHLAPRKKLLIWGGSLGFVLLLLIVASSHQRIRSTILHRTPISTLPVISQEVITADYHPTLLTGFIPTDSDDSDCADFSPSGVIYSTDKLVLHDSLKDIRDSLLKTQYKDLVTLEDEEKMNIDDILKRWYTLSGSSVWIPGMKAHLVVSRVMYLGTNGRSDPLVSFVRVQLFDPDFNELKDIALKFSDKPDGTVIFPYILPVDIPREGSRWLGPEDAKIAVNPETPDDPIVIFNMQNSVNRAMYGFYPFRPENKQVLFSIKDEEPRKKEKNWTPFFVPGSPTTVNFVYDLQKLTILKCSIITGICEKEFVSGDDGQNHGIGIFRGGSNLVPFPTSFTDKDVWVGFPKTHMESCGCSSHIYRPYLMVLVRKGDFYYKAFVSTPLDFGIDVRSWESAESTSCQTAKNVLAVNSISNWDLLDDGLDKDYMTITLSEADVVNSVLRVRGIAKFVDNLTMDDGSTTLSTSNKIDECATTGSKQYCQRYGELH.

Residues 1–24 (MKLDTQQISHLLSRQMYHLAPRKK) lie on the Cytoplasmic side of the membrane. A helical membrane pass occupies residues 25–45 (LLIWGGSLGFVLLLLIVASSH). Over 46-503 (QRIRSTILHR…QYCQRYGELH (458 aa)) the chain is Extracellular. The N-linked (GlcNAc...) asparagine glycan is linked to Asn-468.

This sequence belongs to the BMT family.

It is found in the membrane. Functionally, beta-mannosyltransferase involved in cell wall biosynthesis. Responsible for addition of a hexose to the beta-mannose chain. The chain is Beta-mannosyltransferase 4 (BMT4) from Komagataella phaffii (strain ATCC 76273 / CBS 7435 / CECT 11047 / NRRL Y-11430 / Wegner 21-1) (Yeast).